Here is a 297-residue protein sequence, read N- to C-terminus: UBX domain-containing protein 1 (297 aa).

Ala2 is subject to N-acetylalanine. In terms of domain architecture, UBA spans 2–42 (AELTALESLIEMGFPRGRAEKALALTGNQGIEAAMDWLMEH). Positions 38 to 212 (WLMEHEDDPD…QEPPTKREYD (175 aa)) are disordered. Residues 42 to 52 (HEDDPDVDEPL) show a composition bias toward acidic residues. The segment at 43–297 (EDDPDVDEPL…VLIVAKKCPS (255 aa)) is interaction with BRCA1. 2 stretches are compositionally biased toward basic and acidic residues: residues 86 to 122 (LTEE…EREK) and 137 to 177 (KLQE…ERAQ). Positions 86 to 172 (LTEEERQEQT…RVREKIERDK (87 aa)) form a coiled coil. Ser199 bears the Phosphoserine mark. Position 200 is a phosphoserine; by MAPK12 (Ser200). Phosphothreonine is present on residues Thr207 and Thr229. The UBX domain occupies 209–291 (REYDQCRIQV…GLVPSAVLIV (83 aa)). Phosphoserine is present on Ser270.

Component of a complex required to couple retrotranslocation, ubiquitination and deglycosylation composed of NGLY1, SAKS1, AMFR, VCP and RAD23B. Interacts with HOMER2. Interacts directly with VCP. Interacts with BRCA1 and BARD1; interaction takes place when BRCA1 is not autoubiquitinated bur is strongly enhanced in the presence of autoubiquitinated BRCA1.

It localises to the cytoplasm. Functionally, ubiquitin-binding protein that interacts with the BRCA1-BARD1 heterodimer, and regulates its activity. Specifically binds 'Lys-6'-linked polyubiquitin chains. Interaction with autoubiquitinated BRCA1, leads to inhibit the E3 ubiquitin-protein ligase activity of the BRCA1-BARD1 heterodimer. Component of a complex required to couple deglycosylation and proteasome-mediated degradation of misfolded proteins in the endoplasmic reticulum that are retrotranslocated in the cytosol. This is UBX domain-containing protein 1 (Ubxn1) from Rattus norvegicus (Rat).